We begin with the raw amino-acid sequence, 2378 residues long: Serine/threonine-protein kinase ATM (2378 aa).

The FAT domain maps to 1415 to 1937 (LSARKRNTMM…LHTILMYDDE (523 aa)). Residues 2044–2366 (WKDVFTIADG…LLREATSADN (323 aa)) form the PI3K/PI4K catalytic domain. A G-loop region spans residues 2050-2056 (IADGIST). The catalytic loop stretch occupies residues 2218-2226 (GLGDRHASN). Residues 2238–2263 (HIDLGMILEYSKRTLPVPEQVPFRIT) are activation loop. Residues 2346 to 2378 (TAQSSNLQIRRLLREATSADNLSRMFCGWMPFL) form the FATC domain.

It belongs to the PI3/PI4-kinase family. ATM subfamily.

Its subcellular location is the nucleus. The catalysed reaction is L-seryl-[protein] + ATP = O-phospho-L-seryl-[protein] + ADP + H(+). The enzyme catalyses L-threonyl-[protein] + ATP = O-phospho-L-threonyl-[protein] + ADP + H(+). Functionally, serine/threonine protein kinase which activates checkpoint signaling in the presence of DNA double strand breaks (DSBs) and other forms of DNA damage induced by ionizing radiation and other genotoxic stresses such as UV. Plays a role in maintaining genome stability. The chain is Serine/threonine-protein kinase ATM (atm-1) from Caenorhabditis elegans.